The primary structure comprises 395 residues: MNKKTLKDLNVENKRVLVRVDFNVPIKEGIITDTNRIEASLTTIKYLIDNNAKVILMSHLGRPKGEPKPEFSLKPVAQKLSEMIGQDVKFIDSDKVVDDSVIEESKKLQPKEIMLIQNTRFRKEEEKNDQTFSKELSQLADLYVNDAFGTSHRAHASNVGVSKFLPSAVGFLVQKEIEIMGKALENPERPFTAILGGAKVSDKIGVIENLLDKVDTILIGGAMAFTFIKSQGKNVGKSLIEEDKLDLAKSLLEKAQEKGVKIFLPVDFVVAKEMTEESDSKVINIDDFTDDIAGFDIGTKTIKIFDEEIQKSKTIVWNGPMGVFEIEQFSKGTFEIANSLVKSKAITIVGGGDSASAIAKSGNKDKVTHVSTGGGASLEFLEGKVLPGIDCIDER.

Residues 21–23 (DFN), R36, 59–62 (HLGR), R120, and R153 each bind substrate. Residues K203, G294, E325, and 351–354 (GGDS) each bind ATP.

This sequence belongs to the phosphoglycerate kinase family. Monomer.

It localises to the cytoplasm. It carries out the reaction (2R)-3-phosphoglycerate + ATP = (2R)-3-phospho-glyceroyl phosphate + ADP. Its pathway is carbohydrate degradation; glycolysis; pyruvate from D-glyceraldehyde 3-phosphate: step 2/5. The protein is Phosphoglycerate kinase of Finegoldia magna (strain ATCC 29328 / DSM 20472 / WAL 2508) (Peptostreptococcus magnus).